Reading from the N-terminus, the 177-residue chain is Large ribosomal subunit protein uL6 (177 aa).

The protein belongs to the universal ribosomal protein uL6 family. As to quaternary structure, part of the 50S ribosomal subunit.

This protein binds to the 23S rRNA, and is important in its secondary structure. It is located near the subunit interface in the base of the L7/L12 stalk, and near the tRNA binding site of the peptidyltransferase center. The chain is Large ribosomal subunit protein uL6 from Histophilus somni (strain 2336) (Haemophilus somnus).